Reading from the N-terminus, the 420-residue chain is Anaerobic glycerol-3-phosphate dehydrogenase subunit B (420 aa).

This sequence belongs to the anaerobic G-3-P dehydrogenase subunit B family. Composed of a catalytic GlpA/B dimer and of membrane bound GlpC. FMN serves as cofactor.

The enzyme catalyses a quinone + sn-glycerol 3-phosphate = dihydroxyacetone phosphate + a quinol. It functions in the pathway polyol metabolism; glycerol degradation via glycerol kinase pathway; glycerone phosphate from sn-glycerol 3-phosphate (anaerobic route): step 1/1. In terms of biological role, conversion of glycerol 3-phosphate to dihydroxyacetone. Uses fumarate or nitrate as electron acceptor. The protein is Anaerobic glycerol-3-phosphate dehydrogenase subunit B of Pectobacterium atrosepticum (strain SCRI 1043 / ATCC BAA-672) (Erwinia carotovora subsp. atroseptica).